Consider the following 356-residue polypeptide: Aminodeoxyfutalosine deaminase (356 aa).

His-18 and His-20 together coordinate Zn(2+). 3 residues coordinate substrate: Arg-73, Glu-140, and Gly-172. His-199 is a Zn(2+) binding site. Residue Glu-202 is the Proton donor of the active site. A Zn(2+)-binding site is contributed by Asp-287.

This sequence belongs to the metallo-dependent hydrolases superfamily. Adenosine and AMP deaminases family. It depends on Zn(2+) as a cofactor.

It catalyses the reaction 6-amino-6-deoxyfutalosine + H2O + H(+) = futalosine + NH4(+). It participates in quinol/quinone metabolism; menaquinone biosynthesis. Functionally, catalyzes the deamination of aminodeoxyfutalosine (AFL) into futalosine (FL), a step in the biosynthesis of menaquinone (MK, vitamin K2). Is very poorly efficient on 1-(6-amino-9H-purin-9-yl)-1-deoxy-N-ethyl-beta-D-ribofuranuronamide (NECA), adenosine, 5'-methylthioadenosine, 5'-deoxyadenosine, 2'-deoxyadenosine, and AMP as substrate. This Acidothermus cellulolyticus (strain ATCC 43068 / DSM 8971 / 11B) protein is Aminodeoxyfutalosine deaminase.